A 427-amino-acid chain; its full sequence is Acyltransferase fer5 (427 aa).

Residues 1 to 24 are disordered; sequence MTAATSVQPSPAPRQPGLRATFNP. H342 serves as a coordination point for substrate. E380 functions as the Proton acceptor in the catalytic mechanism.

This sequence belongs to the lysine N-acyltransferase mbtK family.

Its pathway is siderophore biosynthesis. Its function is as follows. Acyltransferase; part of the gene cluster that mediates the biosynthesis of siderophore ferrichrome A which is contributing to organismal virulence. The first step of ferrichrome A biosynthesis is performed by the HMG-CoA synthase hcs1 which catalyzes the generation of HMG-CoA and CoA using acetoacetyl-CoA and acetyl-CoA as substrates. The enoyl-CoA isomerase/hydratase fer4 then catalyzes the conversion of hcs1-produced HMG-CoA to methylglutaconyl-CoA. The acyltransferase fer5 then fuses the fer4-generated methylglutaconyl-CoA with sid1-generated hydroxyornithine to yield methylglutaconyl hydroxyornithine. Methylglutaconyl hydroxyornithine is then available for use by the NRPS fer3 to generate ferrichrome A. The polypeptide is Acyltransferase fer5 (Mycosarcoma maydis (Corn smut fungus)).